The chain runs to 435 residues: Islet cell autoantigen 1-like protein (435 aa).

An AH domain is found at 44-247 (ASDAELDAKL…TAQMMSQIQE (204 aa)). The disordered stretch occupies residues 391–435 (WASQEGSEHSDTLPVPSQHPKKLKYLGPLSNPDAIGHSDDELLNA). Residues 426 to 435 (GHSDDELLNA) are compositionally biased toward basic and acidic residues.

The sequence is that of Islet cell autoantigen 1-like protein (Ica1l) from Rattus norvegicus (Rat).